The following is a 485-amino-acid chain: Glutamyl-tRNA(Gln) amidotransferase subunit A (485 aa).

Residues lysine 78 and serine 153 each act as charge relay system in the active site. Serine 177 (acyl-ester intermediate) is an active-site residue.

Belongs to the amidase family. GatA subfamily. In terms of assembly, heterotrimer of A, B and C subunits.

The enzyme catalyses L-glutamyl-tRNA(Gln) + L-glutamine + ATP + H2O = L-glutaminyl-tRNA(Gln) + L-glutamate + ADP + phosphate + H(+). Allows the formation of correctly charged Gln-tRNA(Gln) through the transamidation of misacylated Glu-tRNA(Gln) in organisms which lack glutaminyl-tRNA synthetase. The reaction takes place in the presence of glutamine and ATP through an activated gamma-phospho-Glu-tRNA(Gln). In Bacillus cereus (strain G9842), this protein is Glutamyl-tRNA(Gln) amidotransferase subunit A.